Here is a 258-residue protein sequence, read N- to C-terminus: Imidazole glycerol phosphate synthase subunit HisF (258 aa).

Catalysis depends on residues Asp-11 and Asp-130.

It belongs to the HisA/HisF family. In terms of assembly, heterodimer of HisH and HisF.

The protein resides in the cytoplasm. The enzyme catalyses 5-[(5-phospho-1-deoxy-D-ribulos-1-ylimino)methylamino]-1-(5-phospho-beta-D-ribosyl)imidazole-4-carboxamide + L-glutamine = D-erythro-1-(imidazol-4-yl)glycerol 3-phosphate + 5-amino-1-(5-phospho-beta-D-ribosyl)imidazole-4-carboxamide + L-glutamate + H(+). It functions in the pathway amino-acid biosynthesis; L-histidine biosynthesis; L-histidine from 5-phospho-alpha-D-ribose 1-diphosphate: step 5/9. IGPS catalyzes the conversion of PRFAR and glutamine to IGP, AICAR and glutamate. The HisF subunit catalyzes the cyclization activity that produces IGP and AICAR from PRFAR using the ammonia provided by the HisH subunit. In Xanthomonas euvesicatoria pv. vesicatoria (strain 85-10) (Xanthomonas campestris pv. vesicatoria), this protein is Imidazole glycerol phosphate synthase subunit HisF.